The chain runs to 156 residues: Arginine repressor (156 aa).

Belongs to the ArgR family.

It localises to the cytoplasm. Its pathway is amino-acid biosynthesis; L-arginine biosynthesis [regulation]. Regulates arginine biosynthesis genes. The protein is Arginine repressor of Yersinia pseudotuberculosis serotype I (strain IP32953).